The primary structure comprises 20 residues: Antifungal protein 2 large subunit (20 aa).

A disordered region spans residues 1-20; that stretch reads PEDPQRRYQEXQREXRXQQE.

As to quaternary structure, heterodimer of a large and a small subunit.

Its function is as follows. Possesses antifungal activity against P.infestans but not F.graminearum. The protein is Antifungal protein 2 large subunit of Malva parviflora (Little mallow).